Consider the following 378-residue polypeptide: Cytochrome P450 monooxygenase pytD (378 aa).

C321 is a binding site for heme.

It belongs to the cytochrome P450 family. Heme serves as cofactor.

Its pathway is secondary metabolite biosynthesis. Its function is as follows. Cytochrome P450 monooxygenase pytD; part of the gene cluster that mediates the biosynthesis of pyranterreones, a family of antioxidative compounds. The first step of pyranonigrins biosynthesis is performed by the hybrid PKS-NRPS synthetase pytA that condenses 4 malonyl-CoA units ato the acetyl starter unit by the modular PKS of pytA. The acyl chain is then connected to an L-serine through the amide bond by the modular NRPS of pytA. A tetramic acid is formed and released from the PKS-NRPS pytA to give pyranterreone 5 with the help of the thioesterase pytI. Pyranterreone 5 could be methylated by pytC to afford pyranterreone 6. Both pyranterreones 5 and 6 are subsequently oxidized by the FAD-linked oxidoreductase pytB and the cytochrome P450 monooxygenase pytD to form the fused gamma-pyrone core, resulting in pyranterreones 7 and 11, respectively. The hydroxy group at C-8 of pyranterreones 7 and 11 are dehydrated by the aspartyl protease pytH to form a delta-7 double bond to give pyranterreones 3 and 1, 2 accordingly. The exo-methylene of pyranterreone 3 could be reduced into a pendant methyl by reductase pytE to provide pyranterreone 4, also known as cordylactam. Pyranterreone 4 can be reconverted to pyranterreone 3 through pytB-catalyzed dehydrogenation or further oxidized to pyranterreones 9 and 10. This chain is Cytochrome P450 monooxygenase pytD, found in Aspergillus terreus (strain NIH 2624 / FGSC A1156).